The primary structure comprises 385 residues: Chaperone protein DnaJ (385 aa).

Residues 5–70 form the J domain; it reads DFYEVLGVSR…QKKAAYDQYG (66 aa). The CR-type zinc-finger motif lies at 137-214; it reads GVSKEIEVPT…CHGQGRKQKT (78 aa). Residues cysteine 150, cysteine 153, cysteine 167, cysteine 170, cysteine 189, cysteine 192, cysteine 202, and cysteine 205 each coordinate Zn(2+). CXXCXGXG motif repeat units follow at residues 150–157, 167–174, 189–196, and 202–209; these read CDTCDGSG, CGTCHGHG, CPTCHGKG, and CNECHGQG.

It belongs to the DnaJ family. As to quaternary structure, homodimer. The cofactor is Zn(2+).

Its subcellular location is the cytoplasm. Participates actively in the response to hyperosmotic and heat shock by preventing the aggregation of stress-denatured proteins and by disaggregating proteins, also in an autonomous, DnaK-independent fashion. Unfolded proteins bind initially to DnaJ; upon interaction with the DnaJ-bound protein, DnaK hydrolyzes its bound ATP, resulting in the formation of a stable complex. GrpE releases ADP from DnaK; ATP binding to DnaK triggers the release of the substrate protein, thus completing the reaction cycle. Several rounds of ATP-dependent interactions between DnaJ, DnaK and GrpE are required for fully efficient folding. Also involved, together with DnaK and GrpE, in the DNA replication of plasmids through activation of initiation proteins. This chain is Chaperone protein DnaJ, found in Vibrio harveyi (Beneckea harveyi).